A 121-amino-acid chain; its full sequence is Small basic protein (121 aa).

A run of 3 helical transmembrane segments spans residues 2–22, 29–49, and 57–77; these read WLPVLGLVLGIAIGLMTNLTI, YLSLAVLAALDTLIGGIRAHL, and VFVSGFFFNIILAISLAFLGV.

The protein belongs to the sbp family.

It localises to the cell membrane. The polypeptide is Small basic protein (sbp) (Bacillus subtilis (strain 168)).